Reading from the N-terminus, the 325-residue chain is Pectinesterase A (325 aa).

The first 18 residues, 1–18 (MRVQSYLSLFSLVGAALC), serve as a signal peptide directing secretion. Asn-126 is a glycosylation site (N-linked (GlcNAc...) asparagine). Gln-143 is a substrate binding site. The active-site Proton donor is the Asp-166. Asp-187 functions as the Nucleophile in the catalytic mechanism. Substrate contacts are provided by Arg-247 and Trp-249.

Belongs to the pectinesterase family.

It localises to the secreted. The enzyme catalyses [(1-&gt;4)-alpha-D-galacturonosyl methyl ester](n) + n H2O = [(1-&gt;4)-alpha-D-galacturonosyl](n) + n methanol + n H(+). It participates in glycan metabolism; pectin degradation; 2-dehydro-3-deoxy-D-gluconate from pectin: step 1/5. Its function is as follows. Involved in maceration and soft-rotting of plant tissue. Active against citrus pectin. The polypeptide is Pectinesterase A (pmeA) (Emericella nidulans (strain FGSC A4 / ATCC 38163 / CBS 112.46 / NRRL 194 / M139) (Aspergillus nidulans)).